Reading from the N-terminus, the 889-residue chain is Terminal uridylyltransferase 3 (889 aa).

A C2H2-type; atypical zinc finger spans residues 123–151 (VRCDLCAKMIESRDEEQIQEHFQVHHAAL). Residues Cys125, Cys128, His143, and His148 each contribute to the Zn(2+) site. UTP-binding positions include Ser225 and 236-239 (SDAD). 2 residues coordinate Mg(2+): Asp237 and Asp239. Arg286 is a binding site for RNA. UTP contacts are provided by residues 394 to 398 (GVRNS), Lys419, Lys423, and 437 to 438 (SY). A PAP-associated domain is found at 505–572 (LGGLIPLFFL…LCIDDPYEDN (68 aa)). The Nucleotide recognition motif (NRM) signature appears at 565-574 (IDDPYEDNFN). 2 disordered regions span residues 675 to 702 (NNKS…HVES) and 829 to 849 (RKKS…NHAG). A compositionally biased stretch (basic residues) spans 829-846 (RKKSKGSKKRKNAVRRGN).

Belongs to the DNA polymerase type-B-like family. The cofactor is Mg(2+). Mn(2+) is required as a cofactor.

The protein resides in the cytoplasm. The catalysed reaction is RNA(n) + UTP = RNA(n)-3'-uridine ribonucleotide + diphosphate. Its function is as follows. Terminal uridylyltransferase which catalyzes the addition of Us to the 3'-hydroxyl group of single-stranded RNAs. Does not mediate RNA-independent UTP polymerization. The sequence is that of Terminal uridylyltransferase 3 from Trypanosoma brucei brucei.